The following is a 214-amino-acid chain: Adenylate kinase (214 aa).

10–15 provides a ligand contact to ATP; that stretch reads GAGKGT. Positions 30–59 are NMP; it reads STGDMFREEISAKSELGRKVEDILKRGELV. AMP-binding positions include T31, R36, 57-59, 85-88, and Q92; these read ELV and GYPR. Residues 126–163 are LID; it reads NRRICKNCGKIYNLITLPPKINGKCDVCGGELYQREDD. R127 contributes to the ATP binding site. Zn(2+) is bound by residues C130 and C133. Position 136-137 (136-137) interacts with ATP; that stretch reads IY. Zn(2+) contacts are provided by C150 and C153. 2 residues coordinate AMP: R160 and R171. Residue M199 coordinates ATP.

The protein belongs to the adenylate kinase family. In terms of assembly, monomer.

It localises to the cytoplasm. The catalysed reaction is AMP + ATP = 2 ADP. It functions in the pathway purine metabolism; AMP biosynthesis via salvage pathway; AMP from ADP: step 1/1. In terms of biological role, catalyzes the reversible transfer of the terminal phosphate group between ATP and AMP. Plays an important role in cellular energy homeostasis and in adenine nucleotide metabolism. In Thermosipho melanesiensis (strain DSM 12029 / CIP 104789 / BI429), this protein is Adenylate kinase.